We begin with the raw amino-acid sequence, 136 residues long: Large ribosomal subunit protein uL16 (136 aa).

Belongs to the universal ribosomal protein uL16 family. As to quaternary structure, part of the 50S ribosomal subunit.

Its function is as follows. Binds 23S rRNA and is also seen to make contacts with the A and possibly P site tRNAs. In Pasteurella multocida (strain Pm70), this protein is Large ribosomal subunit protein uL16.